The following is a 976-amino-acid chain: Protein phosphatase 1 regulatory subunit 12B (976 aa).

A compositionally biased stretch (basic and acidic residues) spans 1–24 (MAELEHLGGKRAESARARRAEQLR). Residues 1–52 (MAELEHLGGKRAESARARRAEQLRRWRGSLTEQEPAERQGAGRQLQTRRGSP) are disordered. Ser29 carries the phosphoserine modification. ANK repeat units lie at residues 57 to 86 (EDGA…DINT), 90 to 119 (DGLT…NVNQ), 123 to 152 (EGWT…SVGI), 216 to 245 (SGAT…ELNV), and 249 to 278 (DGWT…DMDI). Residues 342-489 (EEIPKSQDTE…LDDKDKEREN (148 aa)) are disordered. A compositionally biased stretch (acidic residues) spans 362–374 (SEEEEGEDEVSES). The segment covering 375–385 (ETEKEADKKPE) has biased composition (basic and acidic residues). The segment covering 411 to 423 (FSASSARRLSSLF) has biased composition (low complexity). Residue Thr444 is modified to Phosphothreonine. The segment covering 465 to 477 (SSIYRSSSSPRIS) has biased composition (low complexity). Over residues 480 to 489 (LDDKDKEREN) the composition is skewed to basic and acidic residues. Ser502 carries the phosphoserine modification. Residues 503–873 (STSDIEEKEN…LTSRVEEDSN (371 aa)) are disordered. The span at 538 to 564 (ETPQTIAPSTYTSTYLKRTPYKSQADS) shows a compositional bias: polar residues. A compositionally biased stretch (basic and acidic residues) spans 622–631 (VRDEEAESLR). Basic residues predominate over residues 632 to 642 (KARSRQARQTR). Residue Thr645 is modified to Phosphothreonine. Positions 655-679 (EAEKTFSRSRAERQAQEQPGEKLED) are enriched in basic and acidic residues. Composition is skewed to polar residues over residues 722 to 739 (DKPT…SLYT) and 747 to 763 (SRAS…STHA). The segment covering 765–777 (AAKEMDTSEKGEA) has biased composition (basic and acidic residues). A compositionally biased stretch (basic residues) spans 791-801 (ERRRAKDRRRG). Phosphothreonine is present on Thr802. Over residues 818–830 (EEVKEALHERLSR) the composition is skewed to basic and acidic residues. Phosphoserine is present on Ser833. The segment covering 844–860 (YSDRASARARREAREAR) has biased composition (basic and acidic residues). Position 941 is a phosphoserine (Ser941).

As to quaternary structure, PP1 comprises a catalytic subunit, PPP1CA, PPP1CB or PPP1CC, and one or several targeting or regulatory subunits. PPP1R12B mediates binding to myosin. Isoform 3 and isoform 4 bind PPP1R12A, but not isoform 1 of PPP1R12B itself. Binds IL16.

It localises to the cytoplasm. It is found in the cytoskeleton. The protein resides in the stress fiber. Regulates myosin phosphatase activity. Augments Ca(2+) sensitivity of the contractile apparatus. The protein is Protein phosphatase 1 regulatory subunit 12B (Ppp1r12b) of Mus musculus (Mouse).